The chain runs to 828 residues: Periplasmic nitrate reductase 1 (828 aa).

The segment at residues 1-30 (MKMTRRAFVKANAAASAAAVAGITLPASAA) is a signal peptide (tat-type signal). Residues 41-97 (IKWDKAPCRFCGTGCSVLVGTQNGRVVATQGDPEAPVNKGLNCIKGYFLSKIMYGKD) enclose the 4Fe-4S Mo/W bis-MGD-type domain. Positions 48, 51, 55, and 83 each coordinate [4Fe-4S] cluster. Residues lysine 85, glutamine 152, asparagine 177, cysteine 181, 214–221 (WGSNMAEM), 245–249 (STYYH), 264–266 (QTD), methionine 374, glutamine 378, asparagine 484, 510–511 (SD), lysine 533, aspartate 560, and 718–727 (TGRVLEHWHT) each bind Mo-bis(molybdopterin guanine dinucleotide). Residue phenylalanine 794 participates in substrate binding. Residues asparagine 802 and lysine 819 each contribute to the Mo-bis(molybdopterin guanine dinucleotide) site.

It belongs to the prokaryotic molybdopterin-containing oxidoreductase family. NasA/NapA/NarB subfamily. In terms of assembly, component of the periplasmic nitrate reductase NapAB complex composed of NapA and NapB. Requires [4Fe-4S] cluster as cofactor. The cofactor is Mo-bis(molybdopterin guanine dinucleotide). In terms of processing, predicted to be exported by the Tat system. The position of the signal peptide cleavage has not been experimentally proven.

The protein localises to the periplasm. The enzyme catalyses 2 Fe(II)-[cytochrome] + nitrate + 2 H(+) = 2 Fe(III)-[cytochrome] + nitrite + H2O. Catalytic subunit of the periplasmic nitrate reductase complex NapAB. Receives electrons from NapB and catalyzes the reduction of nitrate to nitrite. The sequence is that of Periplasmic nitrate reductase 1 from Photobacterium profundum (strain SS9).